The primary structure comprises 291 residues: MSWLSKLMPSGIRTDNTPSKKRSVPEGLWEKCSNCGSALYRPELEENLEVCPKCGHHMAIRARARLAALFDADSTTEIAARLGPTDLLKFKDQKKYSERIKIAQKNTGEYDALIAMRGLLKGRALVASSFDFAFMGGSMGSVVGERFSLAAETAVEIGAPYVCFSQSGGARMQEGLFSLMQMAKTSAALGKLREAGLPFISVLTHPTTGGVSASFAMLGDINIAEPQALIGFAGPRVIEQTVREKLPEGFQRSEFLLEHGAIDQICDRREMRDRLADLLAMLGRQPAPEVA.

Residues 1-23 (MSWLSKLMPSGIRTDNTPSKKRS) form a disordered region. The CoA carboxyltransferase N-terminal domain occupies 28–291 (LWEKCSNCGS…LGRQPAPEVA (264 aa)). Residues cysteine 32, cysteine 35, cysteine 51, and cysteine 54 each coordinate Zn(2+). Residues 32–54 (CSNCGSALYRPELEENLEVCPKC) form a C4-type zinc finger.

Belongs to the AccD/PCCB family. As to quaternary structure, acetyl-CoA carboxylase is a heterohexamer composed of biotin carboxyl carrier protein (AccB), biotin carboxylase (AccC) and two subunits each of ACCase subunit alpha (AccA) and ACCase subunit beta (AccD). Zn(2+) is required as a cofactor.

It localises to the cytoplasm. It catalyses the reaction N(6)-carboxybiotinyl-L-lysyl-[protein] + acetyl-CoA = N(6)-biotinyl-L-lysyl-[protein] + malonyl-CoA. It participates in lipid metabolism; malonyl-CoA biosynthesis; malonyl-CoA from acetyl-CoA: step 1/1. Functionally, component of the acetyl coenzyme A carboxylase (ACC) complex. Biotin carboxylase (BC) catalyzes the carboxylation of biotin on its carrier protein (BCCP) and then the CO(2) group is transferred by the transcarboxylase to acetyl-CoA to form malonyl-CoA. The protein is Acetyl-coenzyme A carboxylase carboxyl transferase subunit beta of Stenotrophomonas maltophilia (strain R551-3).